Reading from the N-terminus, the 197-residue chain is Inner membrane-spanning protein YciB (197 aa).

5 consecutive transmembrane segments (helical) span residues 36-56 (IYSA…ALFL), 64-84 (GQWL…TFHS), 90-110 (WKAP…HFIG), 135-155 (LAWI…AFTF), and 162-182 (FKVF…GVYL).

It belongs to the YciB family.

It is found in the cell inner membrane. Its function is as follows. Plays a role in cell envelope biogenesis, maintenance of cell envelope integrity and membrane homeostasis. In Pseudomonas putida (strain ATCC 700007 / DSM 6899 / JCM 31910 / BCRC 17059 / LMG 24140 / F1), this protein is Inner membrane-spanning protein YciB.